The sequence spans 581 residues: Suppressor of cytokine signaling 7 (581 aa).

4 disordered regions span residues 1–23, 89–109, 123–272, and 297–316; these read MVFR…EPGP, PPPP…DPTE, EAES…RTQS, and QRGL…RRSL. 3 stretches are compositionally biased toward pro residues: residues 89-99, 154-164, and 187-198; these read PPPPQPQPPAA, PPGPELPPVPF, and QPPPPPPPPGPL. The interval 124–494 is mediates interaction with SORBS3; that stretch reads AESLETNSCS…GKFLYFLRSR (371 aa). Positions 208–219 are enriched in basic residues; that stretch reads GSFKIRLSRLFR. The segment covering 303–313 has biased composition (pro residues); the sequence is PHPPTPPPPPR. One can recognise an SH2 domain in the interval 400-509; sequence WYWGPMNWED…PTPVQLLYPV (110 aa). One can recognise an SOCS box domain in the interval 504-554; that stretch reads QLLYPVSRFSNVKSLQHLCRFRIRQLVRIDHIPDLPLPKPLISYIRKFYYY.

In terms of assembly, substrate-recognition component of the ECS(SOCS7) complex, composed of SOCS7, CUL5, ELOB, ELOC and RNF7/RBX2. Interacts, via the third proline-rich region, with the second SH3 domain of the adapter protein NCK1. Also interacts with GRB2, INSR, PLCG1, SORBS3/vinexin, and phosphorylated STAT3 and STAT5. Interacts with SEPT6. Interacts with phosphorylated IRS4 and PIK3R1. Expressed in brain and leukocytes. Also in fetal lung fibroblasts and fetal brain.

It localises to the cytoplasm. It is found in the nucleus. Its subcellular location is the cell membrane. It functions in the pathway protein modification; protein ubiquitination. In terms of biological role, substrate-recognition component of a cullin-5-RING E3 ubiquitin-protein ligase complex (ECS complex, also named CRL5 complex), which mediates the ubiquitination and subsequent proteasomal degradation of target proteins, such as DAB1 and IRS1. Specifically recognizes and binds phosphorylated proteins via its SH2 domain, promoting their ubiquitination. The ECS(SOCS7) complex acts as a key regulator of reelin signaling by mediating ubiquitination and degradation of phosphorylated DAB1 in the cortical plate of the developing cerebral cortex, thereby regulating neuron positioning during cortex development. Functions in insulin signaling and glucose homeostasis through IRS1 ubiquitination and subsequent proteasomal degradation. Also inhibits prolactin, growth hormone and leptin signaling by preventing STAT3 and STAT5 activation, sequestering them in the cytoplasm and reducing their binding to DNA. The sequence is that of Suppressor of cytokine signaling 7 from Homo sapiens (Human).